The chain runs to 126 residues: Aspartate 1-decarboxylase (126 aa).

Catalysis depends on Ser-25, which acts as the Schiff-base intermediate with substrate; via pyruvic acid. Position 25 is a pyruvic acid (Ser) (Ser-25). Thr-57 lines the substrate pocket. The active-site Proton donor is Tyr-58. 73-75 (GAA) contributes to the substrate binding site.

It belongs to the PanD family. Heterooctamer of four alpha and four beta subunits. It depends on pyruvate as a cofactor. Is synthesized initially as an inactive proenzyme, which is activated by self-cleavage at a specific serine bond to produce a beta-subunit with a hydroxyl group at its C-terminus and an alpha-subunit with a pyruvoyl group at its N-terminus.

It is found in the cytoplasm. It catalyses the reaction L-aspartate + H(+) = beta-alanine + CO2. It functions in the pathway cofactor biosynthesis; (R)-pantothenate biosynthesis; beta-alanine from L-aspartate: step 1/1. Catalyzes the pyruvoyl-dependent decarboxylation of aspartate to produce beta-alanine. The chain is Aspartate 1-decarboxylase from Sodalis glossinidius (strain morsitans).